Here is a 248-residue protein sequence, read N- to C-terminus: Ubiquinone biosynthesis O-methyltransferase (248 aa).

S-adenosyl-L-methionine contacts are provided by arginine 41, glycine 72, aspartate 93, and methionine 136.

The protein belongs to the methyltransferase superfamily. UbiG/COQ3 family.

It carries out the reaction a 3-demethylubiquinol + S-adenosyl-L-methionine = a ubiquinol + S-adenosyl-L-homocysteine + H(+). The catalysed reaction is a 3-(all-trans-polyprenyl)benzene-1,2-diol + S-adenosyl-L-methionine = a 2-methoxy-6-(all-trans-polyprenyl)phenol + S-adenosyl-L-homocysteine + H(+). It participates in cofactor biosynthesis; ubiquinone biosynthesis. Functionally, O-methyltransferase that catalyzes the 2 O-methylation steps in the ubiquinone biosynthetic pathway. The sequence is that of Ubiquinone biosynthesis O-methyltransferase from Sinorhizobium fredii (strain NBRC 101917 / NGR234).